The following is a 104-amino-acid chain: UPF0145 protein STH1265 (104 aa).

This sequence belongs to the UPF0145 family.

This chain is UPF0145 protein STH1265, found in Symbiobacterium thermophilum (strain DSM 24528 / JCM 14929 / IAM 14863 / T).